A 131-amino-acid polypeptide reads, in one-letter code: UPF0102 protein YraN (131 aa).

A compositionally biased stretch (polar residues) spans 1 to 19; sequence MATVPTRSGSPRQLTTKQT. The interval 1 to 21 is disordered; the sequence is MATVPTRSGSPRQLTTKQTGD.

This sequence belongs to the UPF0102 family.

This chain is UPF0102 protein YraN, found in Escherichia coli (strain K12 / MC4100 / BW2952).